We begin with the raw amino-acid sequence, 539 residues long: MTKFIFVTGGVVSSLGKGITAASLGRLLKDRGLSVTIQKFDPYLNVDPGTMSPYQHGEVFVTDDGAETDLDLGHYERFIDINLNKYSNVTAGKVYSHVLKKERRGDYLGGTVQVIPHITNEIKERLLLAGESTNADVVITEIGGTTGDIESLPFIEAIRQIRSDLSRENVMYIHCTLLPFIKAAGEMKTKPTQHSVKELRGLGIQPDLIVVRTEYEMTQDLKDKIALFCDIPEQNVIECRDAESLYEIPLQLSKQHMDDLVIKRLDLNAKYDTQLDEWKHLLDVVNHLDGEITIGLVGKYVSLQDAYLSVVEALKHAGYPLHKDINVKWIDSSEVTDENAAEFLKDVDGILVPGGFGYRASEGKISAIRYARENNVPYFGICLGMQLATVEFARNVLGLEGAHSAELDPETPYPVIDLLPEQKDIEDLGGTLRLGLYPSEVKEGTLAYDIYGKKEIEERHRHRYEFNNDYREQMEDNGLVFSGVSPDGRRIEMVELPKNDFFFACQFHPEFLSRPNRPQPIFKAFIEAANKYKEAKENK.

The tract at residues M1–L267 is amidoligase domain. S13 is a CTP binding site. S13 provides a ligand contact to UTP. S14–I19 is a binding site for ATP. An L-glutamine-binding site is contributed by Y54. Residue D71 participates in ATP binding. The Mg(2+) site is built by D71 and E141. Residues D148–E150, K188–Q193, and K224 each bind CTP. UTP-binding positions include K188–Q193 and K224. R240–A242 is a binding site for ATP. The 243-residue stretch at T293–A535 folds into the Glutamine amidotransferase type-1 domain. An L-glutamine-binding site is contributed by G355. C382 serves as the catalytic Nucleophile; for glutamine hydrolysis. L-glutamine is bound by residues L383 to Q386, E406, and R463. Residues H508 and E510 contribute to the active site.

The protein belongs to the CTP synthase family. As to quaternary structure, homotetramer.

The enzyme catalyses UTP + L-glutamine + ATP + H2O = CTP + L-glutamate + ADP + phosphate + 2 H(+). The catalysed reaction is L-glutamine + H2O = L-glutamate + NH4(+). It carries out the reaction UTP + NH4(+) + ATP = CTP + ADP + phosphate + 2 H(+). Its pathway is pyrimidine metabolism; CTP biosynthesis via de novo pathway; CTP from UDP: step 2/2. Allosterically activated by GTP, when glutamine is the substrate; GTP has no effect on the reaction when ammonia is the substrate. The allosteric effector GTP functions by stabilizing the protein conformation that binds the tetrahedral intermediate(s) formed during glutamine hydrolysis. Inhibited by the product CTP, via allosteric rather than competitive inhibition. Its function is as follows. Catalyzes the ATP-dependent amination of UTP to CTP with either L-glutamine or ammonia as the source of nitrogen. Regulates intracellular CTP levels through interactions with the four ribonucleotide triphosphates. The chain is CTP synthase from Staphylococcus carnosus (strain TM300).